The sequence spans 91 residues: Bacterial microcompartment shell protein PduJ (91 aa).

The 85-residue stretch at 4-88 (ALGLVETKGL…PHSDVEAILP (85 aa)) folds into the BMC domain.

Belongs to the bacterial microcompartments protein family. As to quaternary structure, homohexamer with a central pore. Interacts with PduP, which targets PduP to the BMC. Interacts with shell protein PduA.

It is found in the bacterial microcompartment. It functions in the pathway polyol metabolism; 1,2-propanediol degradation. In terms of biological role, one of the major shell proteins of the bacterial microcompartment (BMC) dedicated to 1,2-propanediol (1,2-PD) degradation. At least one of PduA or PduJ is required for BMC assembly; it must be encoded as the first gene in the pdu operon. Required for structural integrity of BMCs and to mitigate propionaldehyde toxicity, probably joins facets responsible for BMC closure. Probably the hub for binding multiple enzymes to the interior of the BMC. Expression of a cosmid containing the full 21-gene pdu operon in E.coli allows E.coli to grow on 1,2-PD with the appearance of BMCs in its cytoplasm. Overexpression of this protein leads to an internal structure with a whorled architecture. Its function is as follows. The 1,2-PD-specific bacterial microcompartment (BMC) concentrates low levels of 1,2-PD catabolic enzymes, concentrates volatile reaction intermediates thus enhancing pathway flux and keeps the level of toxic, mutagenic propionaldehyde low. The sequence is that of Bacterial microcompartment shell protein PduJ from Citrobacter freundii.